The chain runs to 372 residues: Protein phosphatase 1 regulatory subunit 42 (372 aa).

7 LRR repeats span residues 30 to 51 (RITHLNFSNKNIDEVEDLTMCR), 52 to 71 (NLTVLYLYDNNINQIKNLGS), 72 to 93 (NLTHLYLQNNCISCIENLSGLK), 94 to 115 (RLEKLYLGGNCLTVVEGLEGLR), 116 to 137 (ELRELHIENQRLPPGEKLLFDP), 146 to 167 (SLSVLNISNNNIDELKDLAVLE), and 168 to 189 (NLTQFVAADNQLKEIKDLEFVL). Residues 203 to 241 (NPVCLKPKYREKVTIISKTLEILDGKEIKEMARQFLLNW) enclose the LRRCT domain.

The protein localises to the cytoplasm. The protein resides in the cytoskeleton. It localises to the microtubule organizing center. Its subcellular location is the centrosome. Its function is as follows. May regulate phosphatase activity of protein phosphatase 1 (PP1) complexes. The sequence is that of Protein phosphatase 1 regulatory subunit 42 (ppp1r42) from Xenopus laevis (African clawed frog).